The primary structure comprises 270 residues: Tryptophan 2,3-dioxygenase-like protein (270 aa).

Belongs to the tryptophan 2,3-dioxygenase family.

The protein is Tryptophan 2,3-dioxygenase-like protein of Xanthomonas campestris pv. campestris (strain 8004).